Consider the following 218-residue polypeptide: Oxidative stress regulator AosR (218 aa).

A CXXXC motif is present at residues 5–9 (CGRRC). A disulfide bridge connects residues C5 and C9.

This sequence belongs to the AosR family. In terms of assembly, homodimer. Under oxidative stress, interacts with the extracytoplasmic-function (ECF) RNA polymerase sigma factor SigH.

Its activity is regulated as follows. Activity is modulated by the formation of a disulfide bound within the N-terminal Cys-X-X-X-Cys (CXXXC) motif. This intramolecular disulfide bond is formed in response to oxidative stress, and results in oxidative stress-dependent interaction with the sigma factor SigH. Functionally, transcription factor crucial for intra-mycobacterial redox homeostasis and protection against host-derived oxidative and nitrosative radicals. In response to oxidative stress, interacts with the ECF sigma factor SigH and, in conjunction with SigH, binds to an auxiliary promoter upstream of mec-cysO-cysM, leading to the transcriptional activation of these genes encoding a non-canonical actinomycete-specific cysteine biosynthesis pathway. Increased transcription of mec-cysO-cysM results in enhanced production of L-cysteine and cysteine-derived antioxidant molecules. Increased production of cysteine protects mycobacteria cells from host phagocyte-derived oxidative and nitrosative stress, thus facilitating the mycobacterial growth in the host. This Mycobacterium bovis (strain ATCC BAA-935 / AF2122/97) protein is Oxidative stress regulator AosR.